A 572-amino-acid chain; its full sequence is Chromatin assembly factor 1 subunit B (572 aa).

WD repeat units follow at residues 11–54 (HNKE…DGKA), 64–103 (RHTK…EPEQ), 127–166 (GHLE…KISI), 169–208 (EHKS…VAFN), 228–279 (FHDD…RPIA), 301–347 (RPVA…PFGY), and 351–392 (IHYH…IPLK). Phosphothreonine is present on threonine 401. The disordered stretch occupies residues 403–572 (DTAKKAKNQT…LAPDDSSKTV (170 aa)). Polar residues predominate over residues 411–430 (QTHQGSSPGSRSVEGTPSNR). At serine 416 the chain carries Phosphoserine. Residue threonine 426 is modified to Phosphothreonine. A compositionally biased stretch (low complexity) spans 431 to 452 (TQDPSSPCTTPSPTTQSPAPSA). The residue at position 436 (serine 436) is a Phosphoserine. Threonine 440 carries the phosphothreonine modification. Residues serine 456 and serine 465 each carry the phosphoserine modification. Lysine 501 is modified (N6-acetyllysine). Phosphothreonine occurs at positions 502 and 510. Residues 511–529 (PLKTDTVPNPQPNSGTAPS) are compositionally biased toward polar residues. Residues 546 to 559 (PELKRPRLEEREGD) are compositionally biased toward basic and acidic residues.

The protein belongs to the WD repeat HIR1 family. As to quaternary structure, subunit of the CAF-1 complex that contains RBBP4, CHAF1B and CHAF1A. CHAF1A binds directly to CHAF1B. Interacts with histones H3.1, H3.2 and H3.1t.

Its subcellular location is the nucleus. It is found in the cytoplasm. Acts as a component of the histone chaperone complex chromatin assembly factor 1 (CAF-1), which assembles histone octamers onto DNA during replication and repair. CAF-1 performs the first step of the nucleosome assembly process, bringing newly synthesized histones H3 and H4 to replicating DNA; histones H2A/H2B can bind to this chromatin precursor subsequent to DNA replication to complete the histone octamer. This Mus musculus (Mouse) protein is Chromatin assembly factor 1 subunit B.